Reading from the N-terminus, the 500-residue chain is Cytochrome P450 71D7 (500 aa).

Residue cysteine 441 coordinates heme.

It belongs to the cytochrome P450 family. It depends on heme as a cofactor.

The protein is Cytochrome P450 71D7 (CYP71D7) of Solanum chacoense (Chaco potato).